The sequence spans 111 residues: Probable 4-amino-4-deoxy-L-arabinose-phosphoundecaprenol flippase subunit ArnE (111 aa).

3 consecutive transmembrane segments (helical) span residues 36-56 (IVLW…LWLL), 61-81 (VPVG…TLAA), and 88-108 (PVSP…VILG). An EamA domain is found at 40 to 109 (LGLALACLGL…IIGGIVILGS (70 aa)).

Belongs to the ArnE family. Heterodimer of ArnE and ArnF.

It is found in the cell inner membrane. Its pathway is bacterial outer membrane biogenesis; lipopolysaccharide biosynthesis. Functionally, translocates 4-amino-4-deoxy-L-arabinose-phosphoundecaprenol (alpha-L-Ara4N-phosphoundecaprenol) from the cytoplasmic to the periplasmic side of the inner membrane. This chain is Probable 4-amino-4-deoxy-L-arabinose-phosphoundecaprenol flippase subunit ArnE, found in Shigella flexneri.